The chain runs to 73 residues: MLLYLYILYIALKTVSHLFFCNPCFRNLSVGDMLNPRLSLSFFTNHLLCPEAPLIIRGKGSYSAVGNFFSRKK.

This is an uncharacterized protein from Saccharomyces cerevisiae (strain ATCC 204508 / S288c) (Baker's yeast).